The sequence spans 490 residues: Stomatal closure-related actin-binding protein 3 (490 aa).

It belongs to the SCAB family. In terms of tissue distribution, expressed in roots, stems, leaves, siliques and flowers.

It localises to the cytoplasm. It is found in the cytoskeleton. Its function is as follows. Probable plant-specific actin binding protein that bundles and stabilizes microfilaments (MFs). The chain is Stomatal closure-related actin-binding protein 3 from Arabidopsis thaliana (Mouse-ear cress).